Here is a 129-residue protein sequence, read N- to C-terminus: Ribosome-binding factor A (129 aa).

Belongs to the RbfA family. In terms of assembly, monomer. Binds 30S ribosomal subunits, but not 50S ribosomal subunits or 70S ribosomes.

The protein localises to the cytoplasm. In terms of biological role, one of several proteins that assist in the late maturation steps of the functional core of the 30S ribosomal subunit. Associates with free 30S ribosomal subunits (but not with 30S subunits that are part of 70S ribosomes or polysomes). Required for efficient processing of 16S rRNA. May interact with the 5'-terminal helix region of 16S rRNA. The sequence is that of Ribosome-binding factor A from Actinobacillus succinogenes (strain ATCC 55618 / DSM 22257 / CCUG 43843 / 130Z).